A 403-amino-acid chain; its full sequence is CCA-adding enzyme (403 aa).

Gly32 and Arg35 together coordinate ATP. Positions 32 and 35 each coordinate CTP. Mg(2+)-binding residues include Asp45 and Asp47. ATP contacts are provided by Arg116, Asp159, Arg162, Arg165, and Arg168. 5 residues coordinate CTP: Arg116, Asp159, Arg162, Arg165, and Arg168.

It belongs to the tRNA nucleotidyltransferase/poly(A) polymerase family. Bacterial CCA-adding enzyme type 3 subfamily. Homodimer. The cofactor is Mg(2+).

It catalyses the reaction a tRNA precursor + 2 CTP + ATP = a tRNA with a 3' CCA end + 3 diphosphate. The enzyme catalyses a tRNA with a 3' CCA end + 2 CTP + ATP = a tRNA with a 3' CCACCA end + 3 diphosphate. In terms of biological role, catalyzes the addition and repair of the essential 3'-terminal CCA sequence in tRNAs without using a nucleic acid template. Adds these three nucleotides in the order of C, C, and A to the tRNA nucleotide-73, using CTP and ATP as substrates and producing inorganic pyrophosphate. tRNA 3'-terminal CCA addition is required both for tRNA processing and repair. Also involved in tRNA surveillance by mediating tandem CCA addition to generate a CCACCA at the 3' terminus of unstable tRNAs. While stable tRNAs receive only 3'-terminal CCA, unstable tRNAs are marked with CCACCA and rapidly degraded. The chain is CCA-adding enzyme from Streptococcus suis (strain 98HAH33).